A 1535-amino-acid chain; its full sequence is CLIP-associating protein 1 (1535 aa).

HEAT repeat units lie at residues 87 to 124 and 163 to 200; these read AQIGTVLPSLIDRLGDAKDSVREQDQTLLLKIMDQAAN and LTLSKIVPHICNLLGDPNSQVRDAAINSLVEIYRHVGE. Positions 237–290 are disordered; the sequence is NEKNFDDEDSVDGNRPSSASSSSSKAPSSSRRNVNLGTTRRLMSSSLGSKSSAA. The residue at position 246 (Ser246) is a Phosphoserine. Residues 252–266 show a composition bias toward low complexity; that stretch reads PSSASSSSSKAPSSS. Residues 267 to 279 show a composition bias toward polar residues; the sequence is RRNVNLGTTRRLM. Residues 280–290 are compositionally biased toward low complexity; that stretch reads SSSLGSKSSAA. HEAT repeat units follow at residues 405 to 440 and 441 to 477; these read HGAEAIMPTIFNLIPNSAKIMATSGVVAVRLIIRHT and HIPRLIPVITSNCTSKSVAVRRRCFEFLDLLLQEWQT. Disordered stretches follow at residues 543 to 600 and 612 to 782; these read SDSI…RSRS and SKVS…GRIP. A phosphoserine mark is found at Ser545, Ser548, Ser558, Ser559, and Ser568. Residues 548 to 567 show a composition bias toward low complexity; sequence SLPQSDRSSSSSQESLNRPL. The segment covering 579–594 has biased composition (low complexity); that stretch reads SRGSTVSTKSVSTTGS. Residue Ser600 is modified to Phosphoserine. The segment covering 612–633 has biased composition (low complexity); the sequence is SKVSSSSGSPAFSSAAALPPGS. Phosphoserine occurs at positions 636, 646, 647, and 649. Residues 645 to 658 are compositionally biased toward polar residues; it reads QSSGSTTNVASTPD. Residue Thr656 is modified to Phosphothreonine. Residues 662–782 are interaction with microtubules, MAPRE1 and MAPRE3; that stretch reads RSRAKVVSQS…FGLGQSGRIP (121 aa). A compositionally biased stretch (low complexity) spans 673 to 695; sequence RSRSANPAGAGSRSSSPGKLLGS. Phosphoserine occurs at positions 684, 688, 695, and 702. Position 708 is a phosphothreonine (Thr708). The residue at position 711 (Ser711) is a Phosphoserine. The segment covering 721-730 has biased composition (polar residues); it reads QGCSRETSPN. Ser784, Ser794, and Ser820 each carry phosphoserine. The HEAT 5 repeat unit spans residues 971–1008; it reads QQFNILMRFIVDQTQTPNLKVKVAILKYIESLARQMDP. The segment at 1078–1157 is disordered; it reads LKNSSNTGVG…APSHKTLRRS (80 aa). The segment covering 1079-1094 has biased composition (polar residues); that stretch reads KNSSNTGVGSPSNTIG. Ser1088 carries the post-translational modification Phosphoserine. Phosphothreonine occurs at positions 1092 and 1096. Residues 1103–1112 are compositionally biased toward low complexity; sequence SRTSPLTSPT. Ser1110, Phe1139, and Ser1193 each carry phosphoserine. Positions 1200 to 1213 are enriched in basic and acidic residues; the sequence is PIKRDGKKDCDIVS. 2 disordered regions span residues 1200-1233 and 1245-1266; these read PIKRDGKKDCDIVSRDGGAASPATEGRGGSEIEG and LNTQPPRAFPGPRAREYNPYPY. Residue Ser1220 is modified to Phosphoserine. Residues 1251 to 1535 form an interaction with CLIP2 and RSN region; sequence RAFPGPRARE…SSSSDVSTHS (285 aa). The interaction with PHLDB2 stretch occupies residues 1251 to 1535; it reads RAFPGPRARE…SSSSDVSTHS (285 aa). The interval 1253-1535 is localization to kinetochores; that stretch reads FPGPRAREYN…SSSSDVSTHS (283 aa). Positions 1296–1327 form a coiled coil; that stretch reads DHSDLVADLLKELSNHNERVEERKGALLELLK. HEAT repeat units lie at residues 1339-1376 and 1457-1494; these read EHFKTILLLLLETLGDKDHSIRALALRVLREILRNQPA and QLLVDIIPGLLQGYDNTESSVRKASVFCLVAIYSVIGE.

This sequence belongs to the CLASP family. In terms of assembly, interacts with ERC1, MAPRE1, MAPRE3, microtubules, and PHLDB2. The interaction with ERC1 may be mediated by PHLDB2. Interacts with GCC2; recruits CLASP1 to Golgi membranes. Interacts with CLIP2 and RSN. Interacts with MACF1. Interacts with mtcl2 and MTCL1. In terms of tissue distribution, highly expressed in brain and heart and at lower levels in kidney, lung, skeletal muscle and testis.

Its subcellular location is the cytoplasm. It is found in the cytoskeleton. The protein resides in the microtubule organizing center. It localises to the centrosome. The protein localises to the chromosome. Its subcellular location is the centromere. It is found in the kinetochore. The protein resides in the spindle. It localises to the golgi apparatus. The protein localises to the trans-Golgi network. In terms of biological role, microtubule plus-end tracking protein that promotes the stabilization of dynamic microtubules. Involved in the nucleation of noncentrosomal microtubules originating from the trans-Golgi network (TGN). Required for the polarization of the cytoplasmic microtubule arrays in migrating cells towards the leading edge of the cell. May act at the cell cortex to enhance the frequency of rescue of depolymerizing microtubules by attaching their plus-ends to cortical platforms composed of ERC1 and PHLDB2. This cortical microtubule stabilizing activity is regulated at least in part by phosphatidylinositol 3-kinase signaling. Also performs a similar stabilizing function at the kinetochore which is essential for the bipolar alignment of chromosomes on the mitotic spindle. The protein is CLIP-associating protein 1 (Clasp1) of Mus musculus (Mouse).